Reading from the N-terminus, the 548-residue chain is Probable manganese-dependent inorganic pyrophosphatase (548 aa).

The interval 1 to 74 is PPase part 1; sequence MKALERVYVI…HIETLEPTVE (74 aa). Mn(2+) is bound by residues H12, D16, and D18. 2 CBS domains span residues 77-132 and 254-311; these read ELKN…RLKI and MSKK…VILV. The PPase part 2 stretch occupies residues 306-548; that stretch reads KKVILVDHNE…KIGEVLRRER (243 aa). Residues D312, H334, and D386 each coordinate Mn(2+).

The protein belongs to the PPase class C family. The cofactor is Mn(2+).

It is found in the cytoplasm. The catalysed reaction is diphosphate + H2O = 2 phosphate + H(+). This Thermotoga maritima (strain ATCC 43589 / DSM 3109 / JCM 10099 / NBRC 100826 / MSB8) protein is Probable manganese-dependent inorganic pyrophosphatase (ppaC).